We begin with the raw amino-acid sequence, 201 residues long: Acyl-homoserine-lactone synthase (201 aa).

It belongs to the autoinducer synthase family.

The enzyme catalyses a fatty acyl-[ACP] + S-adenosyl-L-methionine = an N-acyl-L-homoserine lactone + S-methyl-5'-thioadenosine + holo-[ACP] + H(+). Required for the synthesis of BHL (N-butanoyl-L-homoserine lactone), and HHL (N-hexanoyl-L-homoserine lactone) autoinducer molecules which bind to RhlR and thus acts in elastase biosynthesis regulation. The polypeptide is Acyl-homoserine-lactone synthase (rhlI) (Pseudomonas aeruginosa (strain ATCC 15692 / DSM 22644 / CIP 104116 / JCM 14847 / LMG 12228 / 1C / PRS 101 / PAO1)).